Reading from the N-terminus, the 506-residue chain is MMASQAMVPLRQLFVDGEWRPPAQGRRLPVVNPTTEAHIGEIPAGTAEDVDAAVAAARAALKRNRGRDWARAPGAVRAKYLRAIAAKVIERKQELAKLEALDCGKPYDEAAWDMDDVAGCFEYFADQAEALDKRQNSPVSLPMETFKCHLRREPIGVVGLITPWNYPLLMATWKVAPALAAGCAAVLKPSELASVTCLELADICKEVGLPPGVLNIVTGLGPDAGAPLSAHPDVDKVAFTGSFETGKKIMAAAAPMVKPVTLELGGKSPIVVFDDVDIDKAVEWTLFGCFWTNGQICSATSRLLVHTKIAKEFNEKMVAWAKNIKVSDPLEEGCRLGPVVSEGQYEKIKKFILNAKSEGATILTGGVRPAHLEKGFFIEPTIITDITTSMEIWREEVFGPVLCVKEFSTEDEAIELANDTQYGLAGAVISGDRERCQRLSEEIDAGIIWVNCSQPCFCQAPWGGNKRSGFGRELGEGGIDNYLSVKQVTEYISDEPWGWYRSPSKL.

D102 is a binding site for Na(+). NAD(+) contacts are provided by residues 162 to 164 (TPW) and 188 to 191 (KPSE). L192 lines the Na(+) pocket. Residues 242 to 245 (SFET) and E263 contribute to the NAD(+) site. E263 serves as the catalytic Proton acceptor. C297 (nucleophile) is an active-site residue. NAD(+)-binding residues include E396 and W462.

This sequence belongs to the aldehyde dehydrogenase family.

It carries out the reaction 4-aminobutanal + NAD(+) + H2O = 4-aminobutanoate + NADH + 2 H(+). It catalyses the reaction 3-aminopropanal + NAD(+) + H2O = beta-alanine + NADH + 2 H(+). The catalysed reaction is 4-(trimethylamino)butanal + NAD(+) + H2O = 4-(trimethylamino)butanoate + NADH + 2 H(+). The enzyme catalyses 4-guanidinobutanal + NAD(+) + H2O = 4-guanidinobutanoate + NADH + 2 H(+). It carries out the reaction betaine aldehyde + NAD(+) + H2O = glycine betaine + NADH + 2 H(+). It functions in the pathway amine and polyamine biosynthesis; betaine biosynthesis via choline pathway; betaine from betaine aldehyde: step 1/1. Dehydrogenase that catalyzes the oxidation of several aminoaldehydes. Metabolizes and detoxifies aldehyde products of polyamine degradation to non-toxic amino acids. Catalyzes the oxidation of 4-aminobutanal and 3-aminopropanal to 4-aminobutanoate and beta-alanine, respectively. Catalyzes the oxidation of 4-(trimethylamino)butanal and 4-guanidinobutanal to 4-trimethylammoniobutanoate and 4-guanidinobutanoate, respectively. Catalyzes the oxidation of betaine aldehyde to glycine betaine. The sequence is that of Aminoaldehyde dehydrogenase 1b from Zea mays (Maize).